Reading from the N-terminus, the 272-residue chain is Ribosomal RNA small subunit methyltransferase A (272 aa).

Residues N27, L29, G54, E75, D97, and N117 each contribute to the S-adenosyl-L-methionine site.

Belongs to the class I-like SAM-binding methyltransferase superfamily. rRNA adenine N(6)-methyltransferase family. RsmA subfamily.

The protein localises to the cytoplasm. It catalyses the reaction adenosine(1518)/adenosine(1519) in 16S rRNA + 4 S-adenosyl-L-methionine = N(6)-dimethyladenosine(1518)/N(6)-dimethyladenosine(1519) in 16S rRNA + 4 S-adenosyl-L-homocysteine + 4 H(+). Functionally, specifically dimethylates two adjacent adenosines (A1518 and A1519) in the loop of a conserved hairpin near the 3'-end of 16S rRNA in the 30S particle. May play a critical role in biogenesis of 30S subunits. This chain is Ribosomal RNA small subunit methyltransferase A, found in Malacoplasma penetrans (strain HF-2) (Mycoplasma penetrans).